Reading from the N-terminus, the 62-residue chain is Large ribosomal subunit protein bL28 (62 aa).

This sequence belongs to the bacterial ribosomal protein bL28 family.

This Bacillus velezensis (strain DSM 23117 / BGSC 10A6 / LMG 26770 / FZB42) (Bacillus amyloliquefaciens subsp. plantarum) protein is Large ribosomal subunit protein bL28.